The following is a 72-amino-acid chain: Large ribosomal subunit protein uL29 (72 aa).

The protein belongs to the universal ribosomal protein uL29 family.

The sequence is that of Large ribosomal subunit protein uL29 (rpmC) from Chlamydia muridarum (strain MoPn / Nigg).